An 880-amino-acid polypeptide reads, in one-letter code: EP-cadherin (880 aa).

The first 28 residues, 1 to 28 (MGSTRLRNASVWLCGLLCLLQVVPSINA), serve as a signal peptide directing secretion. Residues 29–155 (DVSGCKPGFS…THTGLKRKKR (127 aa)) constitute a propeptide that is removed on maturation. The N-linked (GlcNAc...) asparagine glycan is linked to Asn61. 5 consecutive Cadherin domains span residues 156-263 (DWVI…RPKF), 264-376 (TQDV…APIF), 377-487 (DPKT…APFF), 488-593 (VPAV…DNGP), and 594-704 (VPSP…GFDL). Topologically, residues 156–703 (DWVIPPIKVS…CQEKLVGGFD (548 aa)) are extracellular. 3 O-linked (GalNAc...) threonine glycosylation sites follow: Thr343, Thr382, and Thr400. Asn425 is a glycosylation site (N-linked (GlcNAc...) asparagine). O-linked (GalNAc...) threonine glycans are attached at residues Thr428, Thr469, Thr471, Thr473, and Thr475. Asn558 is a glycosylation site (N-linked (GlcNAc...) asparagine). Residues Thr562, Thr576, Thr578, and Thr580 are each glycosylated (O-linked (GalNAc...) threonine). 2 disulfide bridges follow: Cys603–Cys687 and Cys685–Cys694. An N-linked (GlcNAc...) asparagine glycan is attached at Asn681. Residues 704-728 (LPIILVILGSVLALLILFLLLLLFL) traverse the membrane as a helical segment. Residues 729-880 (KRKKVVKEPL…DMYGGDDDEE (152 aa)) are Cytoplasmic-facing. Positions 790–826 (PAPHYRPRPSNPDEIGNFIDENLDAADNDPTAPPYDS) are disordered.

In terms of assembly, interacts with CTNNB1.

The protein localises to the cell membrane. Cadherins are calcium-dependent cell adhesion proteins. They preferentially interact with themselves in a homophilic manner in connecting cells; cadherins may thus contribute to the sorting of heterogeneous cell types. This Xenopus laevis (African clawed frog) protein is EP-cadherin.